The following is a 431-amino-acid chain: Guanine nucleotide exchange factor rei-2 (431 aa).

Residues 1 to 21 (MDETATSSEVTETFVSDPTTR) show a composition bias toward polar residues. The disordered stretch occupies residues 1 to 28 (MDETATSSEVTETFVSDPTTRQFEEDGH). 2 coiled-coil regions span residues 149 to 171 (EVLNHHIQRVREVEEERTAAESL) and 214 to 247 (LEAQKATILCLEAEVRQKKNDYTTSLRNLERISE). The interval 249 to 298 (IHEERSTGSLESAVSSDQEDQKSDFKSSESLPGNPPPYAPTAPPPYEDKY) is disordered. Residues 255-264 (TGSLESAVSS) are compositionally biased toward polar residues. A compositionally biased stretch (pro residues) spans 281-293 (GNPPPYAPTAPPP).

The protein belongs to the SH3BP5 family. In terms of assembly, interacts with rab-11.1. Binds preferentially to the GDP-bound form of rab-11.1.

In terms of biological role, guanine nucleotide exchange factor for Rab GTPase Rab-11.1. May spatially and temporally regulate the distribution of Rab-11.1 to target membranes during embryogenesis. May play a role in cytokinesis, probably by targeting rab-11.1 to the cleavage furrows. This Caenorhabditis elegans protein is Guanine nucleotide exchange factor rei-2.